A 674-amino-acid chain; its full sequence is Acyl-coenzyme A oxidase acox-1.1 (674 aa).

Residues 149–152 (YAQT), 157–158 (GT), and Gly191 contribute to the FAD site. Substrate-binding positions include 285–288 (KINY) and Arg295. FAD-binding positions include Arg320 and 340-343 (QQHR). His342, Ser392, His396, and Gln404 together coordinate ATP. Gly411 is an FAD binding site. Position 433–434 (433–434 (YE)) interacts with substrate. The active-site Proton acceptor is the Glu434. Glu436 is a binding site for FAD. Residues 533-536 (RASR) and Tyr581 contribute to the ATP site. The Microbody targeting signal signature appears at 672 to 674 (SKL).

The protein belongs to the acyl-CoA oxidase family. In terms of assembly, homodimer. Forms a heterodimer with acox-1.2. Forms a heterodimer with acox-1.3; the interaction may be important for the stability of acox-1.3. It depends on FAD as a cofactor. In terms of tissue distribution, expressed in hypodermis and intestine.

It localises to the peroxisome. It catalyses the reaction nonanoyl-CoA + O2 = (2E)-nonenoyl-CoA + H2O2. It carries out the reaction dodecanoyl-CoA + O2 = (2E)-dodecenoyl-CoA + H2O2. The enzyme catalyses a 2,3-saturated acyl-CoA + O2 = a (2E)-enoyl-CoA + H2O2. The catalysed reaction is heptanoyl-CoA + O2 = (2E)-heptenoyl-CoA + H2O2. It catalyses the reaction (8R)-8-hydroxynonanoyl-CoA + O2 = (2E,8R)-8-hydroxynonenoyl-CoA + H2O2. It carries out the reaction pentanoyl-CoA + O2 = (2E)-pentenoyl-CoA + H2O2. The enzyme catalyses hexadecanoyl-CoA + O2 = (2E)-hexadecenoyl-CoA + H2O2. The catalysed reaction is IC-asc-C7-CoA + O2 = IC-asc-DeltaC7-CoA + H2O2. It catalyses the reaction IC-asc-C9-CoA + O2 = IC-asc-DeltaC9-CoA + H2O2. It carries out the reaction asc-omegaC5-CoA + O2 = asc-omegaDeltaC5-CoA + H2O2. The enzyme catalyses asc-C7-CoA + O2 = asc-DeltaC7-CoA + H2O2. The catalysed reaction is asc-omegaC7-CoA + O2 = asc-omegaDeltaC7-CoA + H2O2. It catalyses the reaction asc-C9-CoA + O2 = asc-DeltaC9-CoA + H2O2. It carries out the reaction asc-C13-CoA + O2 = asc-DeltaC13-CoA + H2O2. It functions in the pathway lipid metabolism; peroxisomal fatty acid beta-oxidation. With respect to regulation, activated by ATP. ATP binding leads to a conformational change that promotes FAD cofactor binding and enzyme activity. ATP binding likely occurs during acox-1.1 folding and/or dimer formation. In terms of biological role, involved in the first step of peroxisomal beta-oxidation by catalyzing the desaturation of fatty acid-derived side chains. Specifically, catalyzes the desaturation of fatty acids heptanoyl-CoA (C7), nonanoyl-CoA (C9), dodecanoyl-CoA (C12) and to a lesser extent pentanoyl-CoA (C5) and hexadecanoyl-CoA (C16), and hydroxylated fatty acid hydroxynonanoyl-CoA. Also, catalyzes the desaturation fatty acid-derived side chains of ascaroside pheromones, which regulates development and behavior. Specifically, shortens ascaroside with 5-carbon omega side chain (asc-omega-C5), 7-carbon side chain (asc-C7), 9-carbon side chain (asc-C9), 11-carbon side chain (asc-C11), 13-carbon side chain (asc-C13), 15-carbon side chain (asc-C15) and to a lesser extent ascarosides with 7-omega-carbon side chain (asc-omega-C7). Also shortens indol-3-carbonyl(IC)-ascarosides with 7-carbon side chain (IC-asc-C7) and to a lesser extent (IC)-ascarosides with 9-carbon side chain (IC-asc-C9). May associate and regulate the folding and/or the catalytic activity of other acyl-coenzyme A oxidases including acox-1.2, acox-1.3, acox-1.4 and acox-3 modulating the type of ascarosides produced. In association with acox-1.3, catalyzes the desaturation of asc-C7-CoA but not of fatty acids or hydroxylated fatty acids. Involved in the biosynthesis of asc-C6-MK (daumone 2) and asc-delta-C9 (daumone 3) but not asc-C7 (daumone 1); daumones are pheromones produced during unfavourable growth conditions which promote entry into the dauer stage. The chain is Acyl-coenzyme A oxidase acox-1.1 from Caenorhabditis elegans.